The chain runs to 573 residues: Zinc finger protein 10 (573 aa).

One can recognise a KRAB domain in the interval V14 to P85. The C2H2-type 1; atypical zinc finger occupies D206–H232. 9 C2H2-type zinc fingers span residues Y265–H287, Y293–H315, Y321–H343, Y349–H371, Y377–H399, Y405–H427, F433–H455, Y461–H483, and Y489–H511. The C2H2-type 11; atypical zinc-finger motif lies at Y517–H539.

The protein belongs to the krueppel C2H2-type zinc-finger protein family. In terms of assembly, interacts (via the KRAB domain) with TRIM28 (via the RBCC domain).

It is found in the nucleus. Its function is as follows. May be involved in transcriptional regulation. In Homo sapiens (Human), this protein is Zinc finger protein 10 (ZNF10).